A 359-amino-acid polypeptide reads, in one-letter code: Transcription elongation factor A N-terminal and central domain-containing protein (359 aa).

The TFIIS N-terminal domain occupies 1–82; that stretch reads MSDKNQIIAR…AKWRGFYKST (82 aa). A disordered region spans residues 84–118; the sequence is CKPRQSPKVLHTNANKEESAAVSQDVSQDETSGSS. The segment covering 104 to 118 has biased composition (polar residues); the sequence is AVSQDVSQDETSGSS. The TFIIS central domain occupies 182–298; it reads VRSKCVELLY…EHCLPQSVDG (117 aa).

The polypeptide is Transcription elongation factor A N-terminal and central domain-containing protein (Tceanc) (Mus musculus (Mouse)).